The primary structure comprises 3165 residues: Protein eyes shut homolog (3165 aa).

Residues 1 to 21 (MTDKSIIILSLMVFHSSFING) form the signal peptide. N-linked (GlcNAc...) asparagine glycans are attached at residues Asn-42, Asn-105, Asn-117, and Asn-166. 3 consecutive EGF-like domains span residues 170–212 (KQQF…KYCQ), 213–254 (ELDA…KNCS), and 256–292 (IIVQCQPHVCFHGNCSNITSNSFICECDEQFSGPFCE). Disulfide bonds link Cys-174-Cys-189, Cys-183-Cys-200, Cys-202-Cys-211, Cys-217-Cys-228, Cys-222-Cys-242, Cys-244-Cys-253, Cys-260-Cys-270, Cys-265-Cys-280, and Cys-282-Cys-291. Residues Asn-252, Asn-269, and Asn-272 are each glycosylated (N-linked (GlcNAc...) asparagine). Residues Asn-311 and Asn-343 are each glycosylated (N-linked (GlcNAc...) asparagine). EGF-like domains are found at residues 332-368 (DVSECSLILCENGTDGIKISNDVMCICSPIFTDLLCK) and 370-406 (FQTSCESFPLKNNATFKKCEKDYHCSCMSGFTGKNCE). Intrachain disulfides connect Cys-341-Cys-356 and Cys-358-Cys-367. N-linked (GlcNAc...) asparagine glycosylation is present at Asn-382. The cysteines at positions 396 and 405 are disulfide-linked. N-linked (GlcNAc...) asparagine glycans are attached at residues Asn-506, Asn-520, Asn-521, Asn-566, and Asn-573. 3 consecutive EGF-like domains span residues 566 to 602 (NITDDQENKSQHEAICEDEINRPRCSCSLSYIGRLCV), 604 to 641 (NVDYCLGNQSISVHGLCLALSHNCNCSDLQKYEGNICE), and 643 to 679 (DIEDCKSVSCKNGTTSIHLRGYFFYKCVPGFKGTRCE). Cystine bridges form between Cys-592–Cys-601 and Cys-608–Cys-620. Asn-611 and Asn-628 each carry an N-linked (GlcNAc...) asparagine glycan. The cysteines at positions 629 and 640 are disulfide-linked. Asn-654 carries N-linked (GlcNAc...) asparagine glycosylation. 4 cysteine pairs are disulfide-bonded: Cys-669-Cys-678, Cys-685-Cys-696, Cys-690-Cys-705, and Cys-707-Cys-719. The 40-residue stretch at 681 to 720 (DLDECALHPCKSGATCIDQPGNYFCQCGPPFKVVDGFSCL) folds into the EGF-like 9; calcium-binding domain. An EGF-like 10 domain is found at 733–769 (NIDNCILNAFEHNSTYKDLHLSYQCVCLSGWEGNFCE). Asn-745 is a glycosylation site (N-linked (GlcNAc...) asparagine). Disulfide bonds link Cys-759–Cys-768, Cys-775–Cys-786, Cys-780–Cys-795, Cys-797–Cys-806, Cys-813–Cys-824, Cys-818–Cys-835, Cys-837–Cys-846, Cys-853–Cys-866, Cys-860–Cys-876, Cys-878–Cys-887, Cys-894–Cys-905, Cys-899–Cys-914, Cys-916–Cys-925, Cys-932–Cys-943, Cys-937–Cys-952, Cys-954–Cys-963, Cys-970–Cys-981, Cys-975–Cys-990, Cys-992–Cys-1001, Cys-1008–Cys-1019, Cys-1013–Cys-1028, Cys-1030–Cys-1039, Cys-1046–Cys-1056, Cys-1051–Cys-1065, Cys-1067–Cys-1076, Cys-1083–Cys-1094, Cys-1088–Cys-1103, Cys-1105–Cys-1114, Cys-1121–Cys-1137, Cys-1131–Cys-1147, Cys-1149–Cys-1158, Cys-1165–Cys-1176, Cys-1170–Cys-1185, and Cys-1187–Cys-1196. The EGF-like 11; calcium-binding domain occupies 771 to 807 (ESNECKMNPCKNNSTCTDLYKSYRCECTSGWTGQNCS). N-linked (GlcNAc...) asparagine glycosylation is found at Asn-782, Asn-783, and Asn-805. 3 consecutive EGF-like domains span residues 809–847 (EINECDSDPCMNGGLCHESTIPGQFVCLCPPLYTGQFCH), 849–888 (RYNPCDLLNNPCRNNSTCLALVDGNQHCICREEFEGKHCE), and 890–926 (DVKECLFLSCQDYGDCEDMVNNFRCICRPGFSGSLCE). N-linked (GlcNAc...) asparagine glycans are attached at residues Asn-862 and Asn-863. The 37-residue stretch at 928 to 964 (EINECSSEPCKNNGTCVDLTNRFFCNCEPGYHGPFCE) folds into the EGF-like 15; calcium-binding domain. N-linked (GlcNAc...) asparagine glycosylation is present at Asn-940. One can recognise an EGF-like 16 domain in the interval 966–1002 (EVNKCKISPCLDEENCVYRTDRYNCLCAPGYTGINCE). An EGF-like 17; calcium-binding domain is found at 1004-1040 (NLDECLSEPCLHDGVCIDGINHYTCDCKSGFFGTHCE). EGF-like domains follow at residues 1042 to 1077 (NANDCLSNPCLHGRCTEPINEYPCSCDADGTSIQCK), 1079 to 1115 (KINDCTSMPCMNEGFCQKSAHGFTCICPRGYTGAYCE), and 1117 to 1159 (SIDN…QFCE). The EGF-like 21; calcium-binding domain maps to 1161-1197 (NINECSSSPCLHGANCEDHINGYVCKCQPGWSGHHCE). N-linked (GlcNAc...) asparagine glycans are attached at residues Asn-1509, Asn-1906, Asn-1941, and Asn-2033. The Laminin G-like 1 domain maps to 1883-2063 (FSCVCYYGDS…AVRNYHINNC (181 aa)). 4 disulfides stabilise this stretch: Cys-2037-Cys-2063, Cys-2103-Cys-2114, Cys-2108-Cys-2128, and Cys-2130-Cys-2139. The region spanning 2099–2140 (APSVCQEDVCHNGGTCRPIFLSSGIVSFQCDCPLHFTGRFCE) is the EGF-like 22 domain. One can recognise a Laminin G-like 2 domain in the interval 2145–2339 (LFFPSFSGNS…NIENCHVPWC (195 aa)). N-linked (GlcNAc...) asparagine glycans are attached at residues Asn-2170, Asn-2185, and Asn-2228. 6 disulfides stabilise this stretch: Cys-2308–Cys-2339, Cys-2339–Cys-2350, Cys-2344–Cys-2359, Cys-2375–Cys-2386, Cys-2380–Cys-2396, and Cys-2398–Cys-2407. 2 EGF-like domains span residues 2335-2368 (HVPWCAHHLCRNNGTCLSDSENLFCECPRLYSGK) and 2371-2408 (QFASCENNPCGNGATCVPKSGTDIICLCPYGRSGPLCT). An N-linked (GlcNAc...) asparagine glycan is attached at Asn-2347. N-linked (GlcNAc...) asparagine glycosylation is found at Asn-2412, Asn-2453, Asn-2484, Asn-2506, and Asn-2532. Residues 2419-2609 (SGTDAFGYTS…PNAGRSVGQC (191 aa)) form the Laminin G-like 3 domain. Disulfide bonds link Cys-2576-Cys-2609, Cys-2614-Cys-2625, and Cys-2619-Cys-2634. EGF-like domains are found at residues 2610–2646 (HASPCSLMKCGNGGTCIESGTSVYCNCTTRWKGAFCT) and 2648–2689 (TVSI…IYCE). An N-linked (GlcNAc...) asparagine glycan is attached at Asn-2635. 4 disulfide bridges follow: Cys-2636–Cys-2645, Cys-2652–Cys-2668, Cys-2662–Cys-2677, and Cys-2679–Cys-2688. The 179-residue stretch at 2717-2895 (DPSFRSSELS…AKGGSNVGDC (179 aa)) folds into the Laminin G-like 4 domain. 3 N-linked (GlcNAc...) asparagine glycosylation sites follow: Asn-2775, Asn-2800, and Asn-2824. 4 disulfides stabilise this stretch: Cys-2868-Cys-2895, Cys-2900-Cys-2911, Cys-2905-Cys-2920, and Cys-2922-Cys-2931. 2 consecutive EGF-like domains span residues 2896–2932 (DGTACGYNTCRNGGECRVNGTTFSCRCLPDWAGNICN) and 2933–2970 (QSAYCLNNLCLHQSLCIPDQSFSYSCLCTLGWVGRYCE). Asn-2914 carries an N-linked (GlcNAc...) asparagine glycan. Residue Asn-2932 is glycosylated (N-linked (GlcNAc...) asparagine). Disulfide bonds link Cys-2937-Cys-2948, Cys-2942-Cys-2958, and Cys-2960-Cys-2969. 6 N-linked (GlcNAc...) asparagine glycosylation sites follow: Asn-2971, Asn-3006, Asn-3036, Asn-3057, Asn-3073, and Asn-3082. The Laminin G-like 5 domain occupies 2975–3165 (FTTAKFMGNS…YDGDEQNEVT (191 aa)).

Belongs to the EYS family. As to expression, expressed in retina (at protein level).

Its subcellular location is the cell projection. It localises to the cilium. It is found in the photoreceptor outer segment. The protein localises to the cytoplasm. The protein resides in the cytoskeleton. Its subcellular location is the cilium axoneme. It localises to the microtubule organizing center. It is found in the centrosome. The protein localises to the secreted. The protein resides in the extracellular space. Its subcellular location is the extracellular matrix. It localises to the interphotoreceptor matrix. Its function is as follows. Required to maintain the integrity of photoreceptor cells. Specifically required for normal morphology of the photoreceptor ciliary pocket, and might thus facilitate protein trafficking between the photoreceptor inner and outer segments via the transition zone. The sequence is that of Protein eyes shut homolog from Macaca fascicularis (Crab-eating macaque).